The primary structure comprises 122 residues: Small ribosomal subunit protein uS13 (122 aa).

Residues 95–122 form a disordered region; it reads GLPVHGQRTHTNARTRKGPRRGAVGKKK.

It belongs to the universal ribosomal protein uS13 family. Part of the 30S ribosomal subunit. Forms a loose heterodimer with protein S19. Forms two bridges to the 50S subunit in the 70S ribosome.

Functionally, located at the top of the head of the 30S subunit, it contacts several helices of the 16S rRNA. In the 70S ribosome it contacts the 23S rRNA (bridge B1a) and protein L5 of the 50S subunit (bridge B1b), connecting the 2 subunits; these bridges are implicated in subunit movement. Contacts the tRNAs in the A and P-sites. This Desulfovibrio desulfuricans (strain ATCC 27774 / DSM 6949 / MB) protein is Small ribosomal subunit protein uS13.